We begin with the raw amino-acid sequence, 208 residues long: ATP phosphoribosyltransferase (208 aa).

Belongs to the ATP phosphoribosyltransferase family. Short subfamily. Heteromultimer composed of HisG and HisZ subunits.

Its subcellular location is the cytoplasm. The enzyme catalyses 1-(5-phospho-beta-D-ribosyl)-ATP + diphosphate = 5-phospho-alpha-D-ribose 1-diphosphate + ATP. The protein operates within amino-acid biosynthesis; L-histidine biosynthesis; L-histidine from 5-phospho-alpha-D-ribose 1-diphosphate: step 1/9. In terms of biological role, catalyzes the condensation of ATP and 5-phosphoribose 1-diphosphate to form N'-(5'-phosphoribosyl)-ATP (PR-ATP). Has a crucial role in the pathway because the rate of histidine biosynthesis seems to be controlled primarily by regulation of HisG enzymatic activity. The protein is ATP phosphoribosyltransferase of Thermotoga petrophila (strain ATCC BAA-488 / DSM 13995 / JCM 10881 / RKU-1).